Reading from the N-terminus, the 130-residue chain is Methylglyoxal synthase (130 aa).

The 130-residue stretch at 1–130 (MMTRPRIALI…AELSRVEAQP (130 aa)) folds into the MGS-like domain. Residues histidine 12, lysine 16, 38-41 (TGTT), and 58-59 (SG) contribute to the substrate site. Aspartate 64 (proton donor/acceptor) is an active-site residue. Residue histidine 91 coordinates substrate.

Belongs to the methylglyoxal synthase family.

It carries out the reaction dihydroxyacetone phosphate = methylglyoxal + phosphate. Its function is as follows. Catalyzes the formation of methylglyoxal from dihydroxyacetone phosphate. This is Methylglyoxal synthase from Cupriavidus pinatubonensis (strain JMP 134 / LMG 1197) (Cupriavidus necator (strain JMP 134)).